We begin with the raw amino-acid sequence, 350 residues long: MTGGGVLATMDPVRKLVRSQPKIGRHPVAAGQDGRDRHPIRSWECGERARTARTGRTVGRAADPSDHGPSLYNFGGCVEINILGPVSIDTSHSGGGIRAGKVRTLVATLAIDAGRAVSLADLVDELWGATPPDNVLNALQAHAARARKVLNERACPERAGGILRSVLGGYLLEIDPQCVDGNRFLRLVSQGAALLPADPTRAVELLETGLRLWRGPALIDAGEGRRCRGAAALFEERRLTALEDLISAMFLRGGEAQAIAMLQQLVAQYPLRERFCELLMVGLYRVGRQGDALESYRLARKRLDDELGVQPGALLRRRHAEILAQDPVLKVPSALWREPYAPADTSLLSA.

The ompR/PhoB-type DNA-binding region spans 69–174; it reads PSLYNFGGCV…SVLGGYLLEI (106 aa).

Belongs to the AfsR/DnrI/RedD regulatory family.

In terms of biological role, the RedD protein is probably one of several delicately balanced regulatory factors that contribute to the control of the biosynthesis of the antibiotic undecylprodigiosin (Red) in S.coelicolor. The chain is Transcriptional regulator RedD (redD) from Streptomyces coelicolor (strain ATCC BAA-471 / A3(2) / M145).